Here is a 554-residue protein sequence, read N- to C-terminus: Formate--tetrahydrofolate ligase (554 aa).

63–70 provides a ligand contact to ATP; it reads TPAGEGKT.

It belongs to the formate--tetrahydrofolate ligase family.

It catalyses the reaction (6S)-5,6,7,8-tetrahydrofolate + formate + ATP = (6R)-10-formyltetrahydrofolate + ADP + phosphate. It functions in the pathway one-carbon metabolism; tetrahydrofolate interconversion. The sequence is that of Formate--tetrahydrofolate ligase from Halothermothrix orenii (strain H 168 / OCM 544 / DSM 9562).